A 367-amino-acid polypeptide reads, in one-letter code: Carbamoyl-phosphate synthase (367 aa).

Positions 111–296 (KEFYNEIGVP…SLCELVNMAA (186 aa)) constitute an ATP-grasp domain. 137–186 (KMEFPVVLKQGQGQGGKDIKVAESLDDVKEYFEEFDHALCEKFIEGSEIS) lines the ATP pocket. Mg(2+) contacts are provided by Asp253, Glu267, and Asn269. Residues Asp253, Glu267, and Asn269 each contribute to the Mn(2+) site.

It belongs to the small carbamoyl-phosphate synthase family. Forms homodimers and homotetramers (dimers of dimers). Mg(2+) is required as a cofactor. It depends on Mn(2+) as a cofactor.

The enzyme catalyses hydrogencarbonate + NH4(+) + 2 ATP = carbamoyl phosphate + 2 ADP + phosphate + 2 H(+). Functionally, catalyzes the synthesis of carbamoyl phosphate from ATP, ammonium and bicarbonate. Proceeds via a three-step mechanism, i.e. the phosphorylation of hydrogencarbonate to carboxyphosphate, a nucleophilic attack of ammonia on carboxyphosphate yielding carbamate, and the phosphorylation of carbamate forming carbamoyl phosphate. In M.smithii, the predominant archaeon in the human gut, one function of this enzyme may be to sequester ammonia, a scarce nutrient in the intestine which is the major source of nitrogen in M.smithii for the biosynthesis of nucleotides, amino acids, and many other metabolites. The sequence is that of Carbamoyl-phosphate synthase from Methanobrevibacter smithii (strain ATCC 35061 / DSM 861 / OCM 144 / PS).